Reading from the N-terminus, the 336-residue chain is Eukaryotic translation initiation factor 3 subunit I (336 aa).

WD repeat units follow at residues 8–49, 50–91, 93–135, 144–183, 187–226, and 285–324; these read GHER…GTYN, GHNG…KAWE, PTAI…GPQP, PIGS…EVAS, NHIG…VIKS, and GGFG…FRAK.

This sequence belongs to the eIF-3 subunit I family. Component of the eukaryotic translation initiation factor 3 (eIF-3) complex.

The protein resides in the cytoplasm. In terms of biological role, component of the eukaryotic translation initiation factor 3 (eIF-3) complex, which is involved in protein synthesis of a specialized repertoire of mRNAs and, together with other initiation factors, stimulates binding of mRNA and methionyl-tRNAi to the 40S ribosome. The eIF-3 complex specifically targets and initiates translation of a subset of mRNAs involved in cell proliferation. In Puccinia graminis f. sp. tritici (strain CRL 75-36-700-3 / race SCCL) (Black stem rust fungus), this protein is Eukaryotic translation initiation factor 3 subunit I.